A 101-amino-acid polypeptide reads, in one-letter code: Large ribosomal subunit protein uL24 (101 aa).

The protein belongs to the universal ribosomal protein uL24 family. In terms of assembly, part of the 50S ribosomal subunit.

In terms of biological role, one of two assembly initiator proteins, it binds directly to the 5'-end of the 23S rRNA, where it nucleates assembly of the 50S subunit. Its function is as follows. One of the proteins that surrounds the polypeptide exit tunnel on the outside of the subunit. The polypeptide is Large ribosomal subunit protein uL24 (Streptococcus uberis (strain ATCC BAA-854 / 0140J)).